Here is a 378-residue protein sequence, read N- to C-terminus: MEEYEVTTKDSGSGLSVIVAGGGTAGHIEPALAVADALRRLDPAIRVTALGTERGLETRLVPERGYPLELIPPVPLPRKPTVDLLRLPARVRASVRRTRAVIDAVQADVIIGFGGYVALPAYLAAGRGVLRRRRAVPVIVHEANAKAGIANKIGARVARAVLAAVPDSGLPGAEVVGIPVRESITALDRTALRAEARAHFGLPDAGPVLLVFGGSQGARSLNEAIAGAAPQLAAAGISVLHAHGPKNTLDVPETGGTARYVAVPYLSRMDLAYAAADAVVCRSGAMTVAEVSAVGLPAFYVPLPHGNGEQEFNARPIVAQGGGRIVPDSELTPKYVIDEVIPLLLDRTRLTEMGRAAAGAGHRDAADEVARIAVRVAR.

Residues 24-26, N144, R181, S215, and Q310 contribute to the UDP-N-acetyl-alpha-D-glucosamine site; that span reads TAG.

This sequence belongs to the glycosyltransferase 28 family. MurG subfamily.

The protein resides in the cell membrane. It carries out the reaction di-trans,octa-cis-undecaprenyl diphospho-N-acetyl-alpha-D-muramoyl-L-alanyl-D-glutamyl-meso-2,6-diaminopimeloyl-D-alanyl-D-alanine + UDP-N-acetyl-alpha-D-glucosamine = di-trans,octa-cis-undecaprenyl diphospho-[N-acetyl-alpha-D-glucosaminyl-(1-&gt;4)]-N-acetyl-alpha-D-muramoyl-L-alanyl-D-glutamyl-meso-2,6-diaminopimeloyl-D-alanyl-D-alanine + UDP + H(+). It participates in cell wall biogenesis; peptidoglycan biosynthesis. Functionally, cell wall formation. Catalyzes the transfer of a GlcNAc subunit on undecaprenyl-pyrophosphoryl-MurNAc-pentapeptide (lipid intermediate I) to form undecaprenyl-pyrophosphoryl-MurNAc-(pentapeptide)GlcNAc (lipid intermediate II). This chain is UDP-N-acetylglucosamine--N-acetylmuramyl-(pentapeptide) pyrophosphoryl-undecaprenol N-acetylglucosamine transferase, found in Nocardia farcinica (strain IFM 10152).